Reading from the N-terminus, the 479-residue chain is Sulfate adenylyltransferase subunit 1 (479 aa).

Residues 25 to 239 (KSLLRFLTCG…EVLETVDIQR (215 aa)) form the tr-type G domain. The G1 stretch occupies residues 34-41 (GSVDDGKS). Position 34 to 41 (34 to 41 (GSVDDGKS)) interacts with GTP. The G2 stretch occupies residues 92–96 (GITID). The segment at 113–116 (DTPG) is G3. GTP is bound by residues 113-117 (DTPGH) and 168-171 (NKMD). Residues 168–171 (NKMD) form a G4 region. The tract at residues 206 to 208 (SAL) is G5.

The protein belongs to the TRAFAC class translation factor GTPase superfamily. Classic translation factor GTPase family. CysN/NodQ subfamily. As to quaternary structure, heterodimer composed of CysD, the smaller subunit, and CysN.

The enzyme catalyses sulfate + ATP + H(+) = adenosine 5'-phosphosulfate + diphosphate. The protein operates within sulfur metabolism; hydrogen sulfide biosynthesis; sulfite from sulfate: step 1/3. In terms of biological role, with CysD forms the ATP sulfurylase (ATPS) that catalyzes the adenylation of sulfate producing adenosine 5'-phosphosulfate (APS) and diphosphate, the first enzymatic step in sulfur assimilation pathway. APS synthesis involves the formation of a high-energy phosphoric-sulfuric acid anhydride bond driven by GTP hydrolysis by CysN coupled to ATP hydrolysis by CysD. This is Sulfate adenylyltransferase subunit 1 from Salmonella dublin (strain CT_02021853).